Reading from the N-terminus, the 475-residue chain is ATP synthase subunit beta, chloroplastic (475 aa).

An ATP-binding site is contributed by 156–163; the sequence is GGAGVGKT.

Belongs to the ATPase alpha/beta chains family. F-type ATPases have 2 components, CF(1) - the catalytic core - and CF(0) - the membrane proton channel. CF(1) has five subunits: alpha(3), beta(3), gamma(1), delta(1), epsilon(1). CF(0) has four main subunits: a(1), b(1), b'(1) and c(9-12).

Its subcellular location is the plastid. It localises to the chloroplast thylakoid membrane. It carries out the reaction ATP + H2O + 4 H(+)(in) = ADP + phosphate + 5 H(+)(out). Produces ATP from ADP in the presence of a proton gradient across the membrane. The catalytic sites are hosted primarily by the beta subunits. This chain is ATP synthase subunit beta, chloroplastic, found in Phaeodactylum tricornutum (strain CCAP 1055/1).